The following is a 334-amino-acid chain: Protein-glutamate methylesterase FrzG (334 aa).

The CheB-type methylesterase domain occupies 147-334 (PYPLVAIAAS…AALMQWVDVC (188 aa)). Catalysis depends on residues Ser156, His183, and Asp276.

It catalyses the reaction [protein]-L-glutamate 5-O-methyl ester + H2O = L-glutamyl-[protein] + methanol + H(+). Its function is as follows. Probable methylesterase. Required for the normal aggregation of M.xanthus cells during fruiting body formation. It is also a component of a sensory transduction pathway that controls the frequency at which cells reverse their gliding direction. It may remove the methyl group from the gamma-glutamyl methyl ester residues in FrzCD. The protein is Protein-glutamate methylesterase FrzG (frzG) of Myxococcus xanthus.